A 192-amino-acid chain; its full sequence is Flagellar transcriptional regulator FlhC (192 aa).

Residues Cys-137, Cys-140, Cys-157, and Cys-160 each coordinate Zn(2+).

The protein belongs to the FlhC family. Heterohexamer composed of two FlhC and four FlhD subunits. Each FlhC binds a FlhD dimer, forming a heterotrimer, and a hexamer assembles by dimerization of two heterotrimers. It depends on Zn(2+) as a cofactor.

Its subcellular location is the cytoplasm. Its function is as follows. Functions in complex with FlhD as a master transcriptional regulator that regulates transcription of several flagellar and non-flagellar operons by binding to their promoter region. Activates expression of class 2 flagellar genes, including fliA, which is a flagellum-specific sigma factor that turns on the class 3 genes. Also regulates genes whose products function in a variety of physiological pathways. This Escherichia coli O6:H1 (strain CFT073 / ATCC 700928 / UPEC) protein is Flagellar transcriptional regulator FlhC.